A 279-amino-acid chain; its full sequence is Phosphatidylglycerol--prolipoprotein diacylglyceryl transferase (279 aa).

Helical transmembrane passes span 18 to 38 (LSVR…YFVA), 55 to 75 (IIFY…VIFQ), and 89 to 109 (IWHG…AGVI). Residue arginine 137 participates in a 1,2-diacyl-sn-glycero-3-phospho-(1'-sn-glycerol) binding. Helical transmembrane passes span 203 to 223 (LGET…FIEG) and 235 to 255 (IRVA…LIVY).

It belongs to the Lgt family.

It localises to the cell membrane. It carries out the reaction L-cysteinyl-[prolipoprotein] + a 1,2-diacyl-sn-glycero-3-phospho-(1'-sn-glycerol) = an S-1,2-diacyl-sn-glyceryl-L-cysteinyl-[prolipoprotein] + sn-glycerol 1-phosphate + H(+). It participates in protein modification; lipoprotein biosynthesis (diacylglyceryl transfer). Its function is as follows. Catalyzes the transfer of the diacylglyceryl group from phosphatidylglycerol to the sulfhydryl group of the N-terminal cysteine of a prolipoprotein, the first step in the formation of mature lipoproteins. This chain is Phosphatidylglycerol--prolipoprotein diacylglyceryl transferase, found in Staphylococcus aureus (strain Mu3 / ATCC 700698).